The sequence spans 150 residues: Regulatory protein RecX (150 aa).

Belongs to the RecX family.

Its subcellular location is the cytoplasm. Its function is as follows. Modulates RecA activity. This Acidithiobacillus ferrooxidans (strain ATCC 23270 / DSM 14882 / CIP 104768 / NCIMB 8455) (Ferrobacillus ferrooxidans (strain ATCC 23270)) protein is Regulatory protein RecX.